Consider the following 424-residue polypeptide: UDP-N-acetylglucosamine 1-carboxyvinyltransferase (424 aa).

22-23 (KN) contacts phosphoenolpyruvate. Arg-98 is a UDP-N-acetyl-alpha-D-glucosamine binding site. Cys-122 serves as the catalytic Proton donor. The residue at position 122 (Cys-122) is a 2-(S-cysteinyl)pyruvic acid O-phosphothioketal. Residues 127 to 131 (RPVDQ), Asp-312, and Ile-334 each bind UDP-N-acetyl-alpha-D-glucosamine.

The protein belongs to the EPSP synthase family. MurA subfamily.

It is found in the cytoplasm. The catalysed reaction is phosphoenolpyruvate + UDP-N-acetyl-alpha-D-glucosamine = UDP-N-acetyl-3-O-(1-carboxyvinyl)-alpha-D-glucosamine + phosphate. The protein operates within cell wall biogenesis; peptidoglycan biosynthesis. In terms of biological role, cell wall formation. Adds enolpyruvyl to UDP-N-acetylglucosamine. The chain is UDP-N-acetylglucosamine 1-carboxyvinyltransferase from Xanthomonas campestris pv. campestris (strain B100).